We begin with the raw amino-acid sequence, 256 residues long: Imidazole glycerol phosphate synthase subunit HisF (256 aa).

Residues Asp-12 and Asp-131 contribute to the active site.

Belongs to the HisA/HisF family. In terms of assembly, heterodimer of HisH and HisF.

Its subcellular location is the cytoplasm. The enzyme catalyses 5-[(5-phospho-1-deoxy-D-ribulos-1-ylimino)methylamino]-1-(5-phospho-beta-D-ribosyl)imidazole-4-carboxamide + L-glutamine = D-erythro-1-(imidazol-4-yl)glycerol 3-phosphate + 5-amino-1-(5-phospho-beta-D-ribosyl)imidazole-4-carboxamide + L-glutamate + H(+). Its pathway is amino-acid biosynthesis; L-histidine biosynthesis; L-histidine from 5-phospho-alpha-D-ribose 1-diphosphate: step 5/9. Its function is as follows. IGPS catalyzes the conversion of PRFAR and glutamine to IGP, AICAR and glutamate. The HisF subunit catalyzes the cyclization activity that produces IGP and AICAR from PRFAR using the ammonia provided by the HisH subunit. This chain is Imidazole glycerol phosphate synthase subunit HisF, found in Bifidobacterium longum (strain DJO10A).